A 367-amino-acid chain; its full sequence is Aminomethyltransferase (367 aa).

Belongs to the GcvT family. The glycine cleavage system is composed of four proteins: P, T, L and H.

It carries out the reaction N(6)-[(R)-S(8)-aminomethyldihydrolipoyl]-L-lysyl-[protein] + (6S)-5,6,7,8-tetrahydrofolate = N(6)-[(R)-dihydrolipoyl]-L-lysyl-[protein] + (6R)-5,10-methylene-5,6,7,8-tetrahydrofolate + NH4(+). In terms of biological role, the glycine cleavage system catalyzes the degradation of glycine. This Shouchella clausii (strain KSM-K16) (Alkalihalobacillus clausii) protein is Aminomethyltransferase.